Here is a 203-residue protein sequence, read N- to C-terminus: Small ribosomal subunit protein uS4c (203 aa).

Residues 92–150 (MRLDNIIYRLGMAPTIANARQLVNHGHIVVNDRIVTIPSYRCKPKDIISVRNNSTSRNV) form the S4 RNA-binding domain.

The protein belongs to the universal ribosomal protein uS4 family. In terms of assembly, part of the 30S ribosomal subunit. Contacts protein S5. The interaction surface between S4 and S5 is involved in control of translational fidelity.

The protein localises to the plastid. The protein resides in the chloroplast. In terms of biological role, one of the primary rRNA binding proteins, it binds directly to 16S rRNA where it nucleates assembly of the body of the 30S subunit. Functionally, with S5 and S12 plays an important role in translational accuracy. The chain is Small ribosomal subunit protein uS4c (rps4) from Chlorokybus atmophyticus (Soil alga).